The chain runs to 823 residues: Protein Jade-3 (823 aa).

The tract at residues 1–32 (MKRHRPVSSSDSSDESPSTSFTSGSMYRIKSK) is disordered. Low complexity predominate over residues 8–25 (SSSDSSDESPSTSFTSGS). N6-acetyllysine is present on residues K30 and K32. S85 is modified (phosphoserine). The segment at 200 to 250 (DVICDVCRSPDSEEGNDMVFCDKCNVCVHQACYGILKVPEGSWLCRSCVLG) adopts a PHD-type 1 zinc-finger fold. A C2HC pre-PHD-type zinc finger spans residues 252–286 (YPQCVLCPKKGGALKTTKTGTKWAHVSCALWIPEV). The PHD-type 2 zinc finger occupies 310 to 366 (LVCNLCKLKTGACIQCSIKSCITAFHVTCAFEHGLEMKTILDEGDEVKFKSYCLKHS). Disordered regions lie at residues 372 to 395 (LGEA…KTSL) and 542 to 576 (KLKM…VHSI). Residues 561 to 575 (DQQPHSPDSSSSVHS) are compositionally biased toward low complexity. Phosphoserine is present on S566. K601 carries the post-translational modification N6-acetyllysine. At S608 the chain carries Phosphoserine. A disordered region spans residues 609-630 (LSHSRSEAKESSPAWRTPSSEC). Residue K638 is modified to N6-acetyllysine. Polar residues-rich tracts occupy residues 650-664 (SSIG…SKFA) and 673-684 (WSGNVTQKDSSS). The tract at residues 650–684 (SSIGNGKSQPNSKFAKSNGLEGSWSGNVTQKDSSS) is disordered. K735 is modified (N6-acetyllysine). Positions 758-823 (RAPYQENDGY…HPLSHSSMQR (66 aa)) are disordered. Phosphoserine occurs at positions 774, 776, and 780. The span at 781–809 (DGNKEKVRVRKDSSDRENPPHDSRRDCHG) shows a compositional bias: basic and acidic residues.

The protein belongs to the JADE family. As to quaternary structure, component of the HBO1 complex composed at least of ING4 or ING5, KAT7/HBO1, MEAF6, and one of JADE1, JADE2 and JADE3. In terms of tissue distribution, ubiquitously expressed, with highest levels in placenta and uterus.

Scaffold subunit of some HBO1 complexes, which have a histone H4 acetyltransferase activity. This chain is Protein Jade-3 (JADE3), found in Homo sapiens (Human).